Here is a 364-residue protein sequence, read N- to C-terminus: Aminomethyltransferase (364 aa).

It belongs to the GcvT family. In terms of assembly, the glycine cleavage system is composed of four proteins: P, T, L and H.

It carries out the reaction N(6)-[(R)-S(8)-aminomethyldihydrolipoyl]-L-lysyl-[protein] + (6S)-5,6,7,8-tetrahydrofolate = N(6)-[(R)-dihydrolipoyl]-L-lysyl-[protein] + (6R)-5,10-methylene-5,6,7,8-tetrahydrofolate + NH4(+). Functionally, the glycine cleavage system catalyzes the degradation of glycine. This is Aminomethyltransferase from Escherichia coli (strain SMS-3-5 / SECEC).